A 28-amino-acid polypeptide reads, in one-letter code: Phospholipase A2 2 (28 aa).

This sequence belongs to the phospholipase A2 family. Group I subfamily. Requires Ca(2+) as cofactor. As to expression, expressed by the venom gland.

The protein resides in the secreted. The enzyme catalyses a 1,2-diacyl-sn-glycero-3-phosphocholine + H2O = a 1-acyl-sn-glycero-3-phosphocholine + a fatty acid + H(+). Functionally, snake venom phospholipase A2 (PLA2) that inhibits neuromuscular transmission by blocking acetylcholine release from the nerve termini. PLA2 catalyzes the calcium-dependent hydrolysis of the 2-acyl groups in 3-sn-phosphoglycerides. The protein is Phospholipase A2 2 of Micrurus nigrocinctus (Central American coral snake).